Here is a 96-residue protein sequence, read N- to C-terminus: Aspartyl/glutamyl-tRNA(Asn/Gln) amidotransferase subunit C (96 aa).

This sequence belongs to the GatC family. In terms of assembly, heterotrimer of A, B and C subunits.

The enzyme catalyses L-glutamyl-tRNA(Gln) + L-glutamine + ATP + H2O = L-glutaminyl-tRNA(Gln) + L-glutamate + ADP + phosphate + H(+). It catalyses the reaction L-aspartyl-tRNA(Asn) + L-glutamine + ATP + H2O = L-asparaginyl-tRNA(Asn) + L-glutamate + ADP + phosphate + 2 H(+). In terms of biological role, allows the formation of correctly charged Asn-tRNA(Asn) or Gln-tRNA(Gln) through the transamidation of misacylated Asp-tRNA(Asn) or Glu-tRNA(Gln) in organisms which lack either or both of asparaginyl-tRNA or glutaminyl-tRNA synthetases. The reaction takes place in the presence of glutamine and ATP through an activated phospho-Asp-tRNA(Asn) or phospho-Glu-tRNA(Gln). The polypeptide is Aspartyl/glutamyl-tRNA(Asn/Gln) amidotransferase subunit C (Fusobacterium nucleatum subsp. nucleatum (strain ATCC 25586 / DSM 15643 / BCRC 10681 / CIP 101130 / JCM 8532 / KCTC 2640 / LMG 13131 / VPI 4355)).